Consider the following 282-residue polypeptide: ATP synthase gamma chain (282 aa).

It belongs to the ATPase gamma chain family. As to quaternary structure, F-type ATPases have 2 components, CF(1) - the catalytic core - and CF(0) - the membrane proton channel. CF(1) has five subunits: alpha(3), beta(3), gamma(1), delta(1), epsilon(1). CF(0) has three main subunits: a, b and c.

It is found in the cell membrane. Functionally, produces ATP from ADP in the presence of a proton gradient across the membrane. The gamma chain is believed to be important in regulating ATPase activity and the flow of protons through the CF(0) complex. This is ATP synthase gamma chain from Clostridium botulinum (strain ATCC 19397 / Type A).